Consider the following 448-residue polypeptide: Methionine aminopeptidase 2 (448 aa).

Residues 1-94 (MAAQVTDALK…PRVLLSNLFP (94 aa)) form a disordered region. The segment covering 37 to 50 (AEAEDSDDDDEEPV) has biased composition (acidic residues). Residues 61 to 74 (KKKRKRKKKPKKKA) are compositionally biased toward basic residues. Position 201 (His201) interacts with substrate. The a divalent metal cation site is built by Asp221, Asp232, and His301. His309 is a binding site for substrate. Residues Glu334 and Glu429 each contribute to the a divalent metal cation site.

Belongs to the peptidase M24A family. Methionine aminopeptidase eukaryotic type 2 subfamily. Co(2+) serves as cofactor. Requires Zn(2+) as cofactor. It depends on Mn(2+) as a cofactor. The cofactor is Fe(2+).

The protein localises to the cytoplasm. It catalyses the reaction Release of N-terminal amino acids, preferentially methionine, from peptides and arylamides.. Its function is as follows. Cotranslationally removes the N-terminal methionine from nascent proteins. The N-terminal methionine is often cleaved when the second residue in the primary sequence is small and uncharged (Met-Ala-, Cys, Gly, Pro, Ser, Thr, or Val). The chain is Methionine aminopeptidase 2 from Botryotinia fuckeliana (strain B05.10) (Noble rot fungus).